Reading from the N-terminus, the 316-residue chain is Coiled-coil domain-containing protein 130 homolog (316 aa).

A coiled-coil region spans residues 182 to 203; sequence ANSRLRAEFRQQKKEINGQQEL. The segment at 287-316 is disordered; sequence KLEETTSSATNEKPISLVGDYSSSDNDSNG.

The protein belongs to the CWC16 family.

This chain is Coiled-coil domain-containing protein 130 homolog, found in Drosophila melanogaster (Fruit fly).